The primary structure comprises 243 residues: Pyridoxine 5'-phosphate synthase (243 aa).

Asn9 contributes to the 3-amino-2-oxopropyl phosphate binding site. 1-deoxy-D-xylulose 5-phosphate is bound at residue Asp11–His12. Arg20 is a 3-amino-2-oxopropyl phosphate binding site. Residue His45 is the Proton acceptor of the active site. 1-deoxy-D-xylulose 5-phosphate is bound by residues Arg47 and His52. Glu72 (proton acceptor) is an active-site residue. A 1-deoxy-D-xylulose 5-phosphate-binding site is contributed by Thr102. His193 functions as the Proton donor in the catalytic mechanism. Residues Gly194 and Gly215 to His216 contribute to the 3-amino-2-oxopropyl phosphate site.

This sequence belongs to the PNP synthase family. As to quaternary structure, homooctamer; tetramer of dimers.

It localises to the cytoplasm. It catalyses the reaction 3-amino-2-oxopropyl phosphate + 1-deoxy-D-xylulose 5-phosphate = pyridoxine 5'-phosphate + phosphate + 2 H2O + H(+). The protein operates within cofactor biosynthesis; pyridoxine 5'-phosphate biosynthesis; pyridoxine 5'-phosphate from D-erythrose 4-phosphate: step 5/5. In terms of biological role, catalyzes the complicated ring closure reaction between the two acyclic compounds 1-deoxy-D-xylulose-5-phosphate (DXP) and 3-amino-2-oxopropyl phosphate (1-amino-acetone-3-phosphate or AAP) to form pyridoxine 5'-phosphate (PNP) and inorganic phosphate. This is Pyridoxine 5'-phosphate synthase from Escherichia coli O157:H7.